A 603-amino-acid polypeptide reads, in one-letter code: Glutamyl-tRNA(Gln) amidotransferase subunit E (603 aa).

This sequence belongs to the GatB/GatE family. GatE subfamily. In terms of assembly, heterodimer of GatD and GatE.

The enzyme catalyses L-glutamyl-tRNA(Gln) + L-glutamine + ATP + H2O = L-glutaminyl-tRNA(Gln) + L-glutamate + ADP + phosphate + H(+). Allows the formation of correctly charged Gln-tRNA(Gln) through the transamidation of misacylated Glu-tRNA(Gln) in organisms which lack glutaminyl-tRNA synthetase. The reaction takes place in the presence of glutamine and ATP through an activated gamma-phospho-Glu-tRNA(Gln). The GatDE system is specific for glutamate and does not act on aspartate. The polypeptide is Glutamyl-tRNA(Gln) amidotransferase subunit E (Thermoplasma acidophilum (strain ATCC 25905 / DSM 1728 / JCM 9062 / NBRC 15155 / AMRC-C165)).